We begin with the raw amino-acid sequence, 294 residues long: Cytidine deaminase (294 aa).

2 CMP/dCMP-type deaminase domains span residues 48–168 (DEDA…FGPK) and 186–294 (LTGD…VLLA). Substrate is bound at residue 89–91 (NME). A Zn(2+)-binding site is contributed by His-102. The active-site Proton donor is the Glu-104. 2 residues coordinate Zn(2+): Cys-129 and Cys-132.

This sequence belongs to the cytidine and deoxycytidylate deaminase family. As to quaternary structure, homodimer. The cofactor is Zn(2+).

The catalysed reaction is cytidine + H2O + H(+) = uridine + NH4(+). It catalyses the reaction 2'-deoxycytidine + H2O + H(+) = 2'-deoxyuridine + NH4(+). In terms of biological role, this enzyme scavenges exogenous and endogenous cytidine and 2'-deoxycytidine for UMP synthesis. This is Cytidine deaminase from Escherichia coli (strain ATCC 8739 / DSM 1576 / NBRC 3972 / NCIMB 8545 / WDCM 00012 / Crooks).